The primary structure comprises 249 residues: MSRIKLLLEYDGSNYHGFQLQKNANTVQAELEKAIYRLSGERATIVCAGRTDAGVHAWGQVVAFDSCSTIPGDRWAYALNSQLPEDIQVLESQETRAEFNPRFDALKKCYGYLIYRQKKKATFYRHYALCNTEPLKLEAMQEAAEILKGRQNFRSFCASGSSARTFEREIFHCRLSEKGPCLLLHIAADGFLYNMVRIITGTLLEVGKGKYPPQHLREIIASQDRTRAGPTAPPQGLYLLQVFYPEDSK.

The active-site Nucleophile is Asp52. Substrate is bound at residue Tyr110.

Belongs to the tRNA pseudouridine synthase TruA family. Homodimer.

It carries out the reaction uridine(38/39/40) in tRNA = pseudouridine(38/39/40) in tRNA. Functionally, formation of pseudouridine at positions 38, 39 and 40 in the anticodon stem and loop of transfer RNAs. The sequence is that of tRNA pseudouridine synthase A from Syntrophomonas wolfei subsp. wolfei (strain DSM 2245B / Goettingen).